The primary structure comprises 2541 residues: Highly reducing polyketide synthase otaA (2541 aa).

A Ketosynthase family 3 (KS3) domain is found at 9–431 (SEPLAIIGLA…GTNAHVVLED (423 aa)). Catalysis depends on for beta-ketoacyl synthase activity residues C182, H317, and H355. The Malonyl-CoA:ACP transacylase (MAT) domain maps to 571-888 (FIFTGQGANW…GSLLKRYETD (318 aa)). The interval 957–1092 (HELLGVPVED…GSVRVETGPH (136 aa)) is N-terminal hotdog fold. The segment at 957–1251 (HELLGVPVED…GLDLVQLPPS (295 aa)) is dehydratase (DH) domain. Residues 957–1254 (HELLGVPVED…LVQLPPSEDA (298 aa)) enclose the PKS/mFAS DH domain. Residues 1108 to 1254 (TESVDIAQMY…LVQLPPSEDA (147 aa)) form a C-terminal hotdog fold region. S-adenosyl-L-methionine contacts are provided by I1420 and E1442. A methyltransferase (CMeT) domain region spans residues 1433–1605 (HAQTGIKVLE…DQELRNAGLQ (173 aa)). Residues 1838–2141 (HQPNGFHFVE…RQGNAGPWVL (304 aa)) form the Enoyl reductase (ER) domain. In terms of domain architecture, Ketoreductase (KR) spans 2165-2344 (ASYLLIGGFG…PATSISLGSV (180 aa)). In terms of domain architecture, Carrier spans 2453–2530 (DAVELVTRAI…QLAQQAAGGS (78 aa)). S2490 carries the O-(pantetheine 4'-phosphoryl)serine modification.

Requires pantetheine 4'-phosphate as cofactor.

It carries out the reaction 4 malonyl-CoA + acetyl-CoA + 5 NADPH + 9 H(+) = 7-methylmellein + 3 CO2 + 5 NADP(+) + 5 CoA + 4 H2O. The protein operates within mycotoxin biosynthesis. Its function is as follows. Highly reducing polyketide synthase; part of the gene cluster that mediates the biosynthesis of ochratoxin A (OTA), a mycotoxin composed of a chlorinated type I polyketide dihydroisocoumarin moiety linked to L-phenylalanine, and demonstrated to have nephrotoxic, immunotoxic, genotoxic, neurotoxic, and teratogenic properties. OtaA catalyzes the condensation of one acetate and 4 malonate units to form the isocoumarin group. The pathway begins with the highly reducing polyketide synthase otaA that catalyzes the formation of the isocoumarin group during the initial stages of biosynthesis, starting from one acetate and 4 malonate units, to originate the characteristic pentaketide skeleton 7-methylmellein (7-MM) of the OTA molecule. The newly identified cyclase otaY might be involved in the polyketide cyclization reaction during the initial steps of the OTA biosynthesis. 7-MM is then oxidized into 7-carboxymellein (also called ochratoxin beta) by the cytochrome P450 monooxygenase otaC. The NRPS encoded by the otaB gene is involved in the linking of phenylalanine to the dihydroisocoumarin ring. The reaction catalyzed by NRPS results in the production of ochratoxin B (OTB), which is the non-chlorinated analog of OTA and which subsequently serves as the substrate of the halogenase otaD for chlorination activity to form the final molecular structure of OTA, containing a chlorine atom in the C-5 position of the molecule. The sequence is that of Highly reducing polyketide synthase otaA from Aspergillus carbonarius (strain ITEM 5010).